A 20-amino-acid chain; its full sequence is Glutathione S-transferase 2 (20 aa).

In terms of domain architecture, GST N-terminal spans glycine 1–leucine 20. Position 6 (tyrosine 6) interacts with glutathione.

The protein belongs to the GST superfamily. Sigma family.

It catalyses the reaction RX + glutathione = an S-substituted glutathione + a halide anion + H(+). Its function is as follows. Conjugation of reduced glutathione to a wide number of exogenous and endogenous hydrophobic electrophiles. The protein is Glutathione S-transferase 2 (GST2) of Ascaris suum (Pig roundworm).